Reading from the N-terminus, the 492-residue chain is Protein adenylyltransferase Fic (492 aa).

The span at 1–17 (MCMEAEPPSPPAQQQEQ) shows a compositional bias: low complexity. A disordered region spans residues 1 to 21 (MCMEAEPPSPPAQQQEQVNPP). Residues 33-55 (LYRLVLLFVAGSLAAWTFHALSS) traverse the membrane as a helical segment. 2 TPR repeats span residues 118 to 151 (ALGA…APRH) and 152 to 186 (PEVL…SPSN). An Inhibitory (S/T)XXXE(G/N) motif motif is present at residues 243–248 (SVGIEG). ATP contacts are provided by residues E247 and 328–331 (VGGH). One can recognise a Fido domain in the interval 297-432 (ITIKDILELH…IRPFVRFIAD (136 aa)). Residue H375 is part of the active site. ATP contacts are provided by residues 379–386 (DGNGRTSR), 411–412 (YY), and N419.

The protein belongs to the fic family. As to quaternary structure, homodimer.

The protein resides in the membrane. The catalysed reaction is L-tyrosyl-[protein] + ATP = O-(5'-adenylyl)-L-tyrosyl-[protein] + diphosphate. It catalyses the reaction L-threonyl-[protein] + ATP = 3-O-(5'-adenylyl)-L-threonyl-[protein] + diphosphate. It carries out the reaction 3-O-(5'-adenylyl)-L-threonyl-[protein] + H2O = L-threonyl-[protein] + AMP + H(+). Its activity is regulated as follows. The side chain of Glu-247 determines which of the two opposing activities (AMPylase or de-AMPylase) will take place. In response to endoplasmic reticulum stress, mediates de-AMPylase activity. Adenylyltransferase activity is inhibited by the inhibitory helix present at the N-terminus: Glu-247 binds ATP and competes with ATP-binding at Arg-386, thereby preventing adenylyltransferase activity. In unstressed cells, disengagement of Glu-247 promotes adenylyltransferase activity. Activation dissociates ATP-binding from Glu-247, allowing ordered binding of the entire ATP moiety with the alpha-phosphate in an orientation that is productive for accepting an incoming target hydroxyl side chain. Its function is as follows. Protein that can both mediate the addition of adenosine 5'-monophosphate (AMP) to specific residues of target proteins (AMPylation), and the removal of the same modification from target proteins (de-AMPylation), depending on the context. The side chain of Glu-247 determines which of the two opposing activities (AMPylase or de-AMPylase) will take place. Acts as a key regulator of the unfolded protein response (UPR) by mediating AMPylation or de-AMPylation of Hsc70-3/BiP. In unstressed cells, acts as an adenylyltransferase by mediating AMPylation of Hsc70-3/BiP at 'Thr-518', thereby inactivating it. In response to endoplasmic reticulum stress, acts as a phosphodiesterase by mediating removal of ATP (de-AMPylation) from Hsc70-3/BiP at 'Thr-518', leading to restore HSPA5/BiP activity. The chain is Protein adenylyltransferase Fic from Drosophila simulans (Fruit fly).